Here is a 283-residue protein sequence, read N- to C-terminus: 4-diphosphocytidyl-2-C-methyl-D-erythritol kinase (283 aa).

K12 is a catalytic residue. Residue 94 to 104 participates in ATP binding; that stretch reads PAQAGLGGGSS. Residue D136 is part of the active site.

Belongs to the GHMP kinase family. IspE subfamily.

The catalysed reaction is 4-CDP-2-C-methyl-D-erythritol + ATP = 4-CDP-2-C-methyl-D-erythritol 2-phosphate + ADP + H(+). The protein operates within isoprenoid biosynthesis; isopentenyl diphosphate biosynthesis via DXP pathway; isopentenyl diphosphate from 1-deoxy-D-xylulose 5-phosphate: step 3/6. Catalyzes the phosphorylation of the position 2 hydroxy group of 4-diphosphocytidyl-2C-methyl-D-erythritol. In Acidovorax ebreus (strain TPSY) (Diaphorobacter sp. (strain TPSY)), this protein is 4-diphosphocytidyl-2-C-methyl-D-erythritol kinase.